Consider the following 440-residue polypeptide: Glyceraldehyde-3-phosphate dehydrogenase, testis-specific (440 aa).

The segment at 1–105 is testis-specific N-terminal extension; it reads MSRRDVVLTN…PPPPPLQKPA (105 aa). 2 stretches are compositionally biased toward pro residues: residues 40 to 75 and 83 to 102; these read PPKL…PPQI and APPP…PPLQ. Positions 40–106 are disordered; it reads PPKLEDPPPT…PPPPLQKPAR (67 aa). Residues 117-118, aspartate 138, lysine 183, tyrosine 205, and threonine 225 each bind NAD(+); that span reads RI. Residues 255–257, threonine 286, 315–316, and arginine 338 contribute to the D-glyceraldehyde 3-phosphate site; these read SCT and TG. Residue cysteine 256 is the Nucleophile of the active site. Serine 358 bears the Phosphoserine mark. Asparagine 420 is a binding site for NAD(+).

This sequence belongs to the glyceraldehyde-3-phosphate dehydrogenase family. Homotetramer. Testis specific.

It is found in the cytoplasm. The catalysed reaction is D-glyceraldehyde 3-phosphate + phosphate + NAD(+) = (2R)-3-phospho-glyceroyl phosphate + NADH + H(+). It participates in carbohydrate degradation; glycolysis; pyruvate from D-glyceraldehyde 3-phosphate: step 1/5. May play an important role in regulating the switch between different pathways for energy production during spermiogenesis and in the spermatozoon. Required for sperm motility and male fertility. The sequence is that of Glyceraldehyde-3-phosphate dehydrogenase, testis-specific (Gapdhs) from Mus musculus (Mouse).